The sequence spans 93 residues: Cell division topological specificity factor (93 aa).

It belongs to the MinE family.

Prevents the cell division inhibition by proteins MinC and MinD at internal division sites while permitting inhibition at polar sites. This ensures cell division at the proper site by restricting the formation of a division septum at the midpoint of the long axis of the cell. The sequence is that of Cell division topological specificity factor from Alkaliphilus oremlandii (strain OhILAs) (Clostridium oremlandii (strain OhILAs)).